Consider the following 130-residue polypeptide: Ribosome-binding factor A (130 aa).

This sequence belongs to the RbfA family. Monomer. Binds 30S ribosomal subunits, but not 50S ribosomal subunits or 70S ribosomes.

It is found in the cytoplasm. Its function is as follows. One of several proteins that assist in the late maturation steps of the functional core of the 30S ribosomal subunit. Associates with free 30S ribosomal subunits (but not with 30S subunits that are part of 70S ribosomes or polysomes). Required for efficient processing of 16S rRNA. May interact with the 5'-terminal helix region of 16S rRNA. This chain is Ribosome-binding factor A, found in Methylibium petroleiphilum (strain ATCC BAA-1232 / LMG 22953 / PM1).